Consider the following 185-residue polypeptide: Acireductone dioxygenase (185 aa).

His-96, His-98, Glu-102, and His-140 together coordinate Fe(2+). 4 residues coordinate Ni(2+): His-96, His-98, Glu-102, and His-140.

Belongs to the acireductone dioxygenase (ARD) family. In terms of assembly, monomer. Requires Fe(2+) as cofactor. The cofactor is Ni(2+).

The catalysed reaction is 1,2-dihydroxy-5-(methylsulfanyl)pent-1-en-3-one + O2 = 3-(methylsulfanyl)propanoate + CO + formate + 2 H(+). It catalyses the reaction 1,2-dihydroxy-5-(methylsulfanyl)pent-1-en-3-one + O2 = 4-methylsulfanyl-2-oxobutanoate + formate + 2 H(+). The protein operates within amino-acid biosynthesis; L-methionine biosynthesis via salvage pathway; L-methionine from S-methyl-5-thio-alpha-D-ribose 1-phosphate: step 5/6. Functionally, catalyzes 2 different reactions between oxygen and the acireductone 1,2-dihydroxy-3-keto-5-methylthiopentene (DHK-MTPene) depending upon the metal bound in the active site. Fe-containing acireductone dioxygenase (Fe-ARD) produces formate and 2-keto-4-methylthiobutyrate (KMTB), the alpha-ketoacid precursor of methionine in the methionine recycle pathway. Ni-containing acireductone dioxygenase (Ni-ARD) produces methylthiopropionate, carbon monoxide and formate, and does not lie on the methionine recycle pathway. This Marinobacter nauticus (strain ATCC 700491 / DSM 11845 / VT8) (Marinobacter aquaeolei) protein is Acireductone dioxygenase.